A 176-amino-acid chain; its full sequence is ATP synthase subunit b (176 aa).

Residues 7-27 (IQIPDGSAIFVLLTFILLMFI) traverse the membrane as a helical segment. Residues 75 to 94 (SQSQATALMENARKSSEEQS) form a disordered region. Residues 85 to 94 (NARKSSEEQS) show a composition bias toward basic and acidic residues.

Belongs to the ATPase B chain family. As to quaternary structure, F-type ATPases have 2 components, F(1) - the catalytic core - and F(0) - the membrane proton channel. F(1) has five subunits: alpha(3), beta(3), gamma(1), delta(1), epsilon(1). F(0) has three main subunits: a(1), b(2) and c(10-14). The alpha and beta chains form an alternating ring which encloses part of the gamma chain. F(1) is attached to F(0) by a central stalk formed by the gamma and epsilon chains, while a peripheral stalk is formed by the delta and b chains.

Its subcellular location is the cell membrane. F(1)F(0) ATP synthase produces ATP from ADP in the presence of a proton or sodium gradient. F-type ATPases consist of two structural domains, F(1) containing the extramembraneous catalytic core and F(0) containing the membrane proton channel, linked together by a central stalk and a peripheral stalk. During catalysis, ATP synthesis in the catalytic domain of F(1) is coupled via a rotary mechanism of the central stalk subunits to proton translocation. Its function is as follows. Component of the F(0) channel, it forms part of the peripheral stalk, linking F(1) to F(0). In Oenococcus oeni (strain ATCC BAA-331 / PSU-1), this protein is ATP synthase subunit b.